A 66-amino-acid polypeptide reads, in one-letter code: Large ribosomal subunit protein bL31 (66 aa).

Positions 16, 18, 36, and 39 each coordinate Zn(2+).

This sequence belongs to the bacterial ribosomal protein bL31 family. Type A subfamily. Part of the 50S ribosomal subunit. Requires Zn(2+) as cofactor.

Its function is as follows. Binds the 23S rRNA. This Campylobacter jejuni subsp. jejuni serotype O:6 (strain 81116 / NCTC 11828) protein is Large ribosomal subunit protein bL31.